Reading from the N-terminus, the 118-residue chain is UPF0102 protein Bcav_2532 (118 aa).

The protein belongs to the UPF0102 family.

The sequence is that of UPF0102 protein Bcav_2532 from Beutenbergia cavernae (strain ATCC BAA-8 / DSM 12333 / CCUG 43141 / JCM 11478 / NBRC 16432 / NCIMB 13614 / HKI 0122).